Reading from the N-terminus, the 149-residue chain is Nascent polypeptide-associated complex subunit beta-2 (149 aa).

Residues 38–103 enclose the NAC-A/B domain; the sequence is DKDNTKLQAE…PKENTLNGLY (66 aa).

The protein belongs to the NAC-beta family. In terms of assembly, part of the nascent polypeptide-associated complex (NAC), consisting of EGD2 and either EGD1 or BTT1. NAC associates with ribosomes via EGD1 or BTT1.

Its subcellular location is the cytoplasm. The protein resides in the nucleus. Acts as a component of the nascent polypeptide-associated complex (NAC), which promotes mitochondrial protein import by enhancing productive ribosome interactions with the outer mitochondrial membrane. Also blocks the inappropriate interaction of ribosomes translating non-secretory nascent polypeptides with translocation sites in the membrane of the endoplasmic reticulum. BTT1 may act as a transcription factor that exert a negative effect on the expression of several genes that are transcribed by RNA polymerase II. This Saccharomyces cerevisiae (strain YJM789) (Baker's yeast) protein is Nascent polypeptide-associated complex subunit beta-2 (BTT1).